Reading from the N-terminus, the 1331-residue chain is Sodium-dependent transporter bedraggled (1331 aa).

The interval Met1 to Ser62 is disordered. Positions Asn16–Pro25 are enriched in polar residues. A compositionally biased stretch (gly residues) spans Thr28–Thr43. N-linked (GlcNAc...) asparagine glycosylation occurs at Asn168. Disordered regions lie at residues Glu221–Val284 and Gln363–Ser473. The segment covering Lys258–Glu282 has biased composition (polar residues). Over residues Ser369–Glu383 the composition is skewed to basic and acidic residues. Residues Leu413 to Met436 are compositionally biased toward polar residues. Low complexity predominate over residues Pro437–Ser453. Positions Val463–Ser473 are enriched in polar residues. 3 consecutive transmembrane segments (helical) span residues Leu505–Ile525, Phe531–Met551, and Ile567–Leu587. Asn627 and Asn631 each carry an N-linked (GlcNAc...) asparagine glycan. 4 helical membrane passes run Gln667 to Leu687, Ile696 to Val716, Thr741 to Ile761, and Ala778 to Cys798. The N-linked (GlcNAc...) asparagine glycan is linked to Asn857. A helical transmembrane segment spans residues Trp890–Val910. Residue Asn921 is glycosylated (N-linked (GlcNAc...) asparagine). Helical transmembrane passes span Val926–Ile946, Leu956–Ile976, Ala998–Val1018, and Met1044–Ile1064. Disordered regions lie at residues Pro1086–Thr1136, Ser1169–Leu1238, and Val1256–Arg1275. Polar residues-rich tracts occupy residues Ala1097–Gly1115 and Ile1186–Asn1196. Residues Ala1197–Ser1209 are compositionally biased toward low complexity.

The protein belongs to the sodium:neurotransmitter symporter (SNF) (TC 2.A.22) family.

It is found in the membrane. Functionally, putative sodium-dependent transporter which is required for viability, early imaginal disk development and adult motor coordination. Also has a role in the fate commitment of the R3/R4 photoreceptor cells. May function in ommatidial polarity by regulating the activity of the core polarity genes, acting upstream of (or in parallel to) Vang, dsh, pk, stan, and dgo, but downstream or independently of fz. The polypeptide is Sodium-dependent transporter bedraggled (Drosophila melanogaster (Fruit fly)).